Here is a 484-residue protein sequence, read N- to C-terminus: Probable protein disulfide-isomerase ER-60 (484 aa).

A signal peptide spans 1 to 14 (MRWLLSCLFLVAFA). 2 consecutive Thioredoxin domains span residues 15-125 (SCSK…SRAG) and 338-467 (FEDG…REAT). Active-site nucleophile residues include C46, C49, C388, and C391. 2 disulfides stabilise this stretch: C46/C49 and C388/C391. Positions 481-484 (KSEL) match the Prevents secretion from ER motif.

The protein belongs to the protein disulfide isomerase family.

It is found in the endoplasmic reticulum lumen. It carries out the reaction Catalyzes the rearrangement of -S-S- bonds in proteins.. This is Probable protein disulfide-isomerase ER-60 from Schistosoma mansoni (Blood fluke).